Here is a 30-residue protein sequence, read N- to C-terminus: Kalata-B17 (30 aa).

Residues 1-30 (GIPCAESCVYIPCTITALLGCKCKDQVCYN) constitute a cross-link (cyclopeptide (Gly-Asn)). Intrachain disulfides connect cysteine 4-cysteine 21, cysteine 8-cysteine 23, and cysteine 13-cysteine 28.

In terms of processing, this is a cyclic peptide.

Its function is as follows. Probably participates in a plant defense mechanism. The polypeptide is Kalata-B17 (Oldenlandia affinis).